Here is a 483-residue protein sequence, read N- to C-terminus: Betaine aldehyde dehydrogenase (483 aa).

K(+) is bound by residues Ile27 and Asp93. NAD(+) is bound at residue 149–151; it reads GAW. Lys161 acts as the Charge relay system in catalysis. 175 to 178 provides a ligand contact to NAD(+); that stretch reads KPSE. Residue Val179 participates in K(+) binding. Residue 228-231 coordinates NAD(+); the sequence is SVPT. Val243 contacts K(+). Catalysis depends on Glu249, which acts as the Proton acceptor. The NAD(+) site is built by Gly251, Cys283, and Glu380. Cys283 acts as the Nucleophile in catalysis. Residue Cys283 is modified to Cysteine sulfenic acid (-SOH). Residues Lys450 and Gly453 each coordinate K(+). Residue Glu457 is the Charge relay system of the active site.

It belongs to the aldehyde dehydrogenase family. Dimer of dimers. Requires K(+) as cofactor.

It catalyses the reaction betaine aldehyde + NAD(+) + H2O = glycine betaine + NADH + 2 H(+). The protein operates within amine and polyamine biosynthesis; betaine biosynthesis via choline pathway; betaine from betaine aldehyde: step 1/1. Functionally, involved in the biosynthesis of the osmoprotectant glycine betaine. Catalyzes the irreversible oxidation of betaine aldehyde to the corresponding acid. The sequence is that of Betaine aldehyde dehydrogenase from Cereibacter sphaeroides (strain KD131 / KCTC 12085) (Rhodobacter sphaeroides).